We begin with the raw amino-acid sequence, 28 residues long: DLARNLGLVDIDDEYDEDSDKEKPIFNV.

Belongs to the orthopoxvirus OPG079 family. Homoomultimer (Potential). Interacts with the small subunit of ribonucleotide reductase. Interacts with host FAM111A; this interaction protomtes OPG079 degradation through autophagy.

The protein localises to the host cytoplasm. Functionally, plays an essential role in viral DNA replication. Binds to ssDNA with high affinity and localizes to cytoplasmic factories where nascent viral genomes accumulate. May disrupt loops, hairpins and other secondary structures present on ssDNA to reduce and eliminate pausing of viral DNA polymerase at specific sites during elongation. The sequence is that of Truncated protein OPG079 (OPG079) from Vaccinia virus (strain L-IVP) (VACV).